We begin with the raw amino-acid sequence, 542 residues long: Chaperonin GroEL 3 (542 aa).

ATP contacts are provided by residues Thr30–Pro33, Lys51, Asp87–Thr91, Gly415, and Asp496.

Belongs to the chaperonin (HSP60) family. Forms a cylinder of 14 subunits composed of two heptameric rings stacked back-to-back. Interacts with the co-chaperonin GroES.

The protein resides in the cytoplasm. It catalyses the reaction ATP + H2O + a folded polypeptide = ADP + phosphate + an unfolded polypeptide.. Together with its co-chaperonin GroES, plays an essential role in assisting protein folding. The GroEL-GroES system forms a nano-cage that allows encapsulation of the non-native substrate proteins and provides a physical environment optimized to promote and accelerate protein folding. This Sinorhizobium medicae (strain WSM419) (Ensifer medicae) protein is Chaperonin GroEL 3.